A 411-amino-acid polypeptide reads, in one-letter code: Putative competence-damage inducible protein (411 aa).

The protein belongs to the CinA family.

In Caldicellulosiruptor saccharolyticus (strain ATCC 43494 / DSM 8903 / Tp8T 6331), this protein is Putative competence-damage inducible protein.